The primary structure comprises 499 residues: Probable cytosol aminopeptidase (499 aa).

Mn(2+) contacts are provided by Lys-267 and Asp-272. The active site involves Lys-279. Mn(2+)-binding residues include Asp-290, Asp-349, and Glu-351. Arg-353 is a catalytic residue.

This sequence belongs to the peptidase M17 family. It depends on Mn(2+) as a cofactor.

The protein localises to the cytoplasm. It carries out the reaction Release of an N-terminal amino acid, Xaa-|-Yaa-, in which Xaa is preferably Leu, but may be other amino acids including Pro although not Arg or Lys, and Yaa may be Pro. Amino acid amides and methyl esters are also readily hydrolyzed, but rates on arylamides are exceedingly low.. It catalyses the reaction Release of an N-terminal amino acid, preferentially leucine, but not glutamic or aspartic acids.. In terms of biological role, presumably involved in the processing and regular turnover of intracellular proteins. Catalyzes the removal of unsubstituted N-terminal amino acids from various peptides. This Buchnera aphidicola subsp. Acyrthosiphon pisum (strain 5A) protein is Probable cytosol aminopeptidase.